We begin with the raw amino-acid sequence, 532 residues long: tRNA-2-methylthio-N(6)-dimethylallyladenosine synthase (532 aa).

The tract at residues 1 to 21 (MTSTVAHGAGSAGPADDVEPM) is disordered. An MTTase N-terminal domain is found at 24–140 (RTYQVRTYGC…LPALLDRARH (117 aa)). Residues cysteine 33, cysteine 69, cysteine 103, cysteine 177, cysteine 181, and cysteine 184 each coordinate [4Fe-4S] cluster. A Radical SAM core domain is found at 163–399 (RESAYAAWVS…VELQEQISLE (237 aa)). Residues 402-470 (RAIVGQRVEL…PHHLIADGGI (69 aa)) form the TRAM domain. The disordered stretch occupies residues 510 to 532 (TSCGSAGGCGSADGAGSSAGDPQ). The segment covering 523-532 (GAGSSAGDPQ) has biased composition (low complexity).

The protein belongs to the methylthiotransferase family. MiaB subfamily. In terms of assembly, monomer. Requires [4Fe-4S] cluster as cofactor.

It is found in the cytoplasm. The enzyme catalyses N(6)-dimethylallyladenosine(37) in tRNA + (sulfur carrier)-SH + AH2 + 2 S-adenosyl-L-methionine = 2-methylsulfanyl-N(6)-dimethylallyladenosine(37) in tRNA + (sulfur carrier)-H + 5'-deoxyadenosine + L-methionine + A + S-adenosyl-L-homocysteine + 2 H(+). Catalyzes the methylthiolation of N6-(dimethylallyl)adenosine (i(6)A), leading to the formation of 2-methylthio-N6-(dimethylallyl)adenosine (ms(2)i(6)A) at position 37 in tRNAs that read codons beginning with uridine. The protein is tRNA-2-methylthio-N(6)-dimethylallyladenosine synthase of Mycobacterium ulcerans (strain Agy99).